Consider the following 517-residue polypeptide: Forkhead box protein N4 (517 aa).

Residues 193–289 (KPIYSYSCLI…EEMHKWKRKD (97 aa)) constitute a DNA-binding region (fork-head). 2 disordered regions span residues 365 to 398 (VQPQAHLAPDSPAPAQTPPLHALPDLSPSPLPHP) and 497 to 517 (SGTSSSSQYLGAQGNKPIALL).

It is found in the nucleus. Functionally, transcription factor essential for neural and some non-neural tissues development, such as retina and lung respectively. Binds to an 11-bp consensus sequence containing the invariant tetranucleotide 5'-ACGC-3'. During development of the central nervous system, is required to specify the amacrine and horizontal cell fates from multipotent retinal progenitors while suppressing the alternative photoreceptor cell fates through activating DLL4-NOTCH signaling. Also acts synergistically with ASCL1/MASH1 to activate DLL4-NOTCH signaling and drive commitment of p2 progenitors to the V2b interneuron fates during spinal cord neurogenesis. In development of non-neural tissues, plays an essential role in the specification of the atrioventricular canal and is indirectly required for patterning the distal airway during lung development. In Homo sapiens (Human), this protein is Forkhead box protein N4 (FOXN4).